The chain runs to 241 residues: Small ribosomal subunit protein uS2 (241 aa).

This sequence belongs to the universal ribosomal protein uS2 family.

This is Small ribosomal subunit protein uS2 from Pectobacterium carotovorum subsp. carotovorum (strain PC1).